A 221-amino-acid chain; its full sequence is Probable endo-1,4-beta-xylanase B (221 aa).

The signal sequence occupies residues 1 to 19 (MVSFSSLALALSTVVGVLA). A GH11 domain is found at 33 to 221 (QLTHSQTGTK…SSGSATMTVS (189 aa)). The Nucleophile role is filled by E117. The active-site Proton donor is E208.

Belongs to the glycosyl hydrolase 11 (cellulase G) family.

The protein localises to the secreted. It carries out the reaction Endohydrolysis of (1-&gt;4)-beta-D-xylosidic linkages in xylans.. It functions in the pathway glycan degradation; xylan degradation. Its function is as follows. Endo-1,4-beta-xylanase involved in the hydrolysis of xylan, a major structural heterogeneous polysaccharide found in plant biomass representing the second most abundant polysaccharide in the biosphere, after cellulose. The chain is Probable endo-1,4-beta-xylanase B (xlnB) from Aspergillus clavatus (strain ATCC 1007 / CBS 513.65 / DSM 816 / NCTC 3887 / NRRL 1 / QM 1276 / 107).